Consider the following 513-residue polypeptide: NADH-quinone oxidoreductase chain 13 (513 aa).

A run of 14 helical transmembrane segments spans residues 3 to 23, 34 to 54, 81 to 101, 112 to 132, 133 to 153, 164 to 184, 211 to 231, 250 to 270, 277 to 297, 312 to 332, 340 to 360, 383 to 403, 418 to 438, and 463 to 483; these read NLLS…ALFL, AKWL…FVLF, VDGI…LTIL, EYMI…TALD, LVLF…IIGI, FKFF…MIAM, MTVV…SFAV, PTAG…YGFL, FPVA…IAIV, VIAY…FAAN, IFQM…VGVI, AAVF…SGFV, WVAL…LWLY, and WVFI…RLVT.

This sequence belongs to the complex I subunit 4 family. As to quaternary structure, NDH-1 is composed of at least 14 different subunits, Nqo1 to Nqo14. The complex has a L-shaped structure, with the hydrophobic arm (subunits Nqo7, Nqo8, Nqo10 to Nqo14) embedded in the inner membrane and the hydrophilic peripheral arm (subunits Nqo1 to Nqo6, Nqo9) protruding into the bacterial cytoplasm. The hydrophilic domain contains all the redox centers.

It is found in the cell inner membrane. It carries out the reaction a quinone + NADH + 5 H(+)(in) = a quinol + NAD(+) + 4 H(+)(out). In terms of biological role, NDH-1 shuttles electrons from NADH, via FMN and iron-sulfur (Fe-S) centers, to quinones in the respiratory chain. The immediate electron acceptor for the enzyme in this species is believed to be ubiquinone. Couples the redox reaction to proton translocation (for every two electrons transferred, four hydrogen ions are translocated across the cytoplasmic membrane), and thus conserves the redox energy in a proton gradient. This is NADH-quinone oxidoreductase chain 13 from Paracoccus denitrificans.